Consider the following 644-residue polypeptide: Chaperone protein DnaK (644 aa).

Phosphothreonine; by autocatalysis is present on T199. The interval 605-644 (KKSSEGQAAQGQTQSQESTKPAEEGVVDAEFEEVKEEDKK) is disordered. Polar residues predominate over residues 609 to 623 (EGQAAQGQTQSQEST). Residues 629-644 (GVVDAEFEEVKEEDKK) show a composition bias toward acidic residues.

It belongs to the heat shock protein 70 family.

Functionally, acts as a chaperone. This is Chaperone protein DnaK from Legionella pneumophila subsp. pneumophila (strain Philadelphia 1 / ATCC 33152 / DSM 7513).